We begin with the raw amino-acid sequence, 580 residues long: Negative elongation factor B (580 aa).

Lysine 519 is modified (N6-acetyllysine). The disordered stretch occupies residues leucine 548–leucine 580. Serine 557 is modified (phosphoserine).

It belongs to the NELF-B family. As to quaternary structure, the NELF complex is composed of NELFA, NELFB, NELFCD (isoform NELF-C or isoform NELF-D) and NELFE; the N-terminus of NELFB binds to the NELFA:NELFCD subcomplex. Binds RNA which may help to stabilize the NELF complex on nucleic acid. Interacts with the first BRCT repeat of BRCA1. Interacts with KIAA1191. Interacts with NELFE. As to expression, widely expressed. Expressed in heart, brain, lung, placenta, liver, skeletal muscle, kidney and pancreas.

It localises to the nucleus. Functionally, essential component of the NELF complex, a complex that negatively regulates the elongation of transcription by RNA polymerase II. The NELF complex, which acts via an association with the DSIF complex and causes transcriptional pausing, is counteracted by the P-TEFb kinase complex. May be able to induce chromatin unfolding. Essential for early embryogenesis; plays an important role in maintaining the undifferentiated state of embryonic stem cells (ESCs) by preventing unscheduled expression of developmental genes. Plays a key role in establishing the responsiveness of stem cells to developmental cues; facilitates plasticity and cell fate commitment in ESCs by establishing the appropriate expression level of signaling molecules. Supports the transcription of genes involved in energy metabolism in cardiomyocytes; facilitates the association of transcription initiation factors with the promoters of the metabolism-related genes. In terms of biological role, (Microbial infection) The NELF complex is involved in HIV-1 latency possibly involving recruitment of PCF11 to paused RNA polymerase II. In vitro, binds weakly to the HIV-1 TAR RNA which is located in the long terminal repeat (LTR) of HIV-1. This chain is Negative elongation factor B (NELFB), found in Homo sapiens (Human).